The chain runs to 482 residues: Histone deacetylase 1 (482 aa).

The segment at 9–321 (RKVCYYYDGD…WTYETAVALD (313 aa)) is histone deacetylase. Glycine 27 and lysine 31 together coordinate 1D-myo-inositol 1,4,5,6-tetrakisphosphate. Lysine 74 carries the post-translational modification N6-acetyllysine; alternate. Lysine 74 is covalently cross-linked (Glycyl lysine isopeptide (Lys-Gly) (interchain with G-Cter in SUMO2); alternate). The active site involves histidine 141. Aspartate 176 and histidine 178 together coordinate Zn(2+). The residue at position 220 (lysine 220) is an N6-acetyllysine. Cysteine 261 is modified (S-nitrosocysteine). Aspartate 264 contacts Zn(2+). Arginine 270 contributes to the 1D-myo-inositol 1,4,5,6-tetrakisphosphate binding site. At cysteine 273 the chain carries S-nitrosocysteine. Positions 390-400 (PEESGDEDEED) are enriched in acidic residues. A disordered region spans residues 390–482 (PEESGDEDEE…KGVKEEVKMA (93 aa)). 5 positions are modified to phosphoserine: serine 393, serine 406, serine 409, serine 421, and serine 423. Over residues 401-416 (PDKRISICSSDKRIAC) the composition is skewed to basic and acidic residues. The span at 417–427 (EEEFSDSDEEG) shows a compositional bias: acidic residues. The residue at position 432 (lysine 432) is an N6-methylated lysine; by EHMT2. Lysine 438 participates in a covalent cross-link: Glycyl lysine isopeptide (Lys-Gly) (interchain with G-Cter in SUMO2). Positions 443–482 (VKTEDEKEKDPEEKKEVTEEEKTKEEKPEAKGVKEEVKMA) are enriched in basic and acidic residues. Lysine 444 participates in a covalent cross-link: Glycyl lysine isopeptide (Lys-Gly) (interchain with G-Cter in SUMO2); alternate. A Glycyl lysine isopeptide (Lys-Gly) (interchain with G-Cter in SUMO); alternate cross-link involves residue lysine 444. Residues lysine 456, lysine 457, and lysine 473 each participate in a glycyl lysine isopeptide (Lys-Gly) (interchain with G-Cter in SUMO2) cross-link. Residue lysine 476 forms a Glycyl lysine isopeptide (Lys-Gly) (interchain with G-Cter in SUMO2); alternate linkage. Residue lysine 476 forms a Glycyl lysine isopeptide (Lys-Gly) (interchain with G-Cter in SUMO); alternate linkage. Residue lysine 480 forms a Glycyl lysine isopeptide (Lys-Gly) (interchain with G-Cter in SUMO2) linkage.

Belongs to the histone deacetylase family. HD type 1 subfamily. As to quaternary structure, part of the core histone deacetylase (HDAC) complex composed of HDAC1, HDAC2, RBBP4 and RBBP7, the core complex associates with SIN3, SAP18 and SAP30 to form the SIN3 HDAC complex. Component of the nucleosome remodeling and deacetylase (NuRD) repressor complex, composed of core proteins MTA1, MTA2, MTA3, RBBP4, RBBP7, HDAC1, HDAC2, MBD2, MBD3, and peripherally associated proteins CDK2AP1, CDK2AP2, GATAD2A, GATAD2B, CHD3, CHD4 and CHD5. The exact stoichiometry of the NuRD complex is unknown, and some subunits such as MBD2 and MBD3, GATAD2A and GATAD2B, and CHD3, CHD4 and CHD5 define mutually exclusive NuRD complexes. Component of a BHC histone deacetylase complex that contains HDAC1, HDAC2, HMG20B/BRAF35, KDM1A, RCOR1/CoREST and PHF21A/BHC80. The BHC complex may also contain ZMYM2, ZNF217, ZMYM3, GSE1 and GTF2I. Component of a mSin3A corepressor complex that contains SIN3A, SAP130, SUDS3/SAP45, ARID4B/SAP180, HDAC1 and HDAC2. Found in a trimeric complex with APBB1 and TSHZ3; the interaction between HDAC1 and APBB1 is mediated by TSHZ3. Forms a complex comprising APPL1, RUVBL2, APPL2, CTNNB1 and HDAC2. Component of a RCOR/GFI/KDM1A/HDAC complex. Part of a complex composed of TRIM28, HDAC1, HDAC2 and EHMT2. Part of a complex containing at least CDYL, MIER1, MIER2, HDAC1 and HDAC2. The large PER complex involved in the histone deacetylation is composed of at least HDAC1, PER2, SFPQ and SIN3A. Associates with the 9-1-1 complex; interacts with HUS1. Found in a complex with DNMT3A and HDAC7. Found in a complex with YY1, SIN3A and GON4L. Identified in a histone deacetylase complex that contains DNTTIP1, HDAC1 and MIDEAS; this complex assembles into a tetramer that contains four copies of each protein chain. Found in a complex composed of at least SINHCAF, SIN3A, HDAC1, SAP30, RBBP4, OGT and TET1. Component of the SIN3B complex, which includes SIN3B, HDAC1, PHF12 and MORF4L1. Interacts with GFI1; the interaction is direct. Interacts directly with GFI1B. Interacts with TSHZ3 (via N-terminus); the interaction is direct. Interacts with APEX1; the interaction is not dependent on the acetylated status of APEX1. Interacts with BANP. Interacts with BAZ2A/TIP5. Interacts with BCL6. Interacts with BCOR. Interacts with BHLHE40/DEC1. Interacts with BRCC3; this interaction is enhanced in the presence of PWWP2B. Interacts with BRMS1. Interacts with BRMS1L. Interacts with C10orf90/FATS (via its N-terminal); the interaction prevents binding of HDAC1 to CDKN1A/p21 and facilitates the acetylation and stabilization of CDKN1A/p21. Interacts with CBFA2T3. Interacts with CCAR2. Interacts with CDK2AP1. Interacts with CHD3. Interacts with CHD4. Interacts with CHFR. Interacts with CIART. Interacts with CDKN1A/p21. Interacts with CDK5 complexed to CDK5R1 (p25). Interacts with CRY1. Interacts with DAXX. Interacts with DDIT3/CHOP. Interacts with DDX5. Interacts with DHX36; this interaction occurs in a RNA-dependent manner. Interacts with DNMT1. Interacts with DNTTIP1. Interacts with E4F1. Interacts with EP300. Interacts with ERCC6. Interacts with GATAD2A. Interacts with HCFC1. Interacts with HDAC9. Interacts with HUS1. Interacts with INSM1. Interacts with KDM4A. Interacts with KDM5A; this interaction impairs histone deacetylation. Interacts with KDM5B. Interacts with KLF1. Interacts with MBD3L2. Interacts with MIER1. Interacts with NFE4. Interacts with NR4A2/NURR1. Interacts with NR1D2 (via C-terminus). Interacts with NRIP1. Interacts with NSD2. Interacts with PACS2. Interacts with PHB2. Interacts with PPHLN1. Interacts with PRDM6. Interacts with PRDM16. Interacts with PWWP2A in a MTA1-dependent manner. Interacts with PWWP2B. Interacts with RB1. Interacts with RERE. Interacts with SANBR (via the BTB domain). Interacts with SAMSN1. Interacts with SAP30L. Interacts with SETDB1. Interacts with SIN3A. Interacts with SMAD3. Interacts with SMAD4; positively regulated by ZBTB7A. Interacts with SMARCAD1. Interacts with SMARCA4/BRG1. Interacts with SMYD2. Interacts with SMYD4 (via MYND-type zinc finger). Interacts with SP1; the interaction deacetylates SP1 and regulates its transcriptional activity. Interacts with SP3; the interaction deacetylates SP3 and regulates its transcriptional activity. In vitro, C(18) ceramides increase this interaction and the subsequent SP3 deacetylation and SP3-mediated repression of the TERT promoter. Interacts with SPEN/MINT. Interacts with SPHK2. Interacts with SUV39H1. Interacts with TGIF. Interacts with TGIF2. Interacts with TRAF6. Interacts with TRIM28; the interaction recruits HDAC1 to E2F1 and inhibits its acetylation. Interacts with TSC22D3 isoform 1; this interaction affects HDAC1 activity on MYOG promoter and thus inhibits MYOD1 transcriptional activity. Interacts with UHRF1. Interacts with UHRF2. Interacts with ZBTB7A. Interacts with ZMYND8. Interacts with ZMYND15. Interacts with ZNF431. Interacts with ZNF516; this interaction is enhanced in the presence of PWWP2B. Interacts with ZNF541. Interacts with ZNF638. Interacts with ZNHIT1. Interacts with the non-histone region of MACROH2A1. Identified in a complex with HDAC2, KCTD19, DNTTIP1 and ZNF541. Interacts with MSX3. Interacts with VRK1. Requires Zn(2+) as cofactor. Post-translationally, sumoylated on Lys-444 and Lys-476; which promotes enzymatic activity. Desumoylated by SENP1. Phosphorylation on Ser-421 and Ser-423 promotes enzymatic activity and interactions with NuRD and SIN3 complexes. Phosphorylated by CDK5. In terms of processing, ubiquitinated by CHFR and KCTD11, leading to its degradation by the proteasome.

The protein localises to the nucleus. It carries out the reaction N(6)-acetyl-L-lysyl-[histone] + H2O = L-lysyl-[histone] + acetate. The catalysed reaction is N(6)-acetyl-L-lysyl-[protein] + H2O = L-lysyl-[protein] + acetate. The enzyme catalyses N(6)-(2E)-butenoyl-L-lysyl-[protein] + H2O = (2E)-2-butenoate + L-lysyl-[protein]. It catalyses the reaction N(6)-[(S)-lactoyl]-L-lysyl-[protein] + H2O = (S)-lactate + L-lysyl-[protein]. With respect to regulation, inositol tetraphosphate (1D-myo-inositol 1,4,5,6-tetrakisphosphate) may act as an intermolecular glue between HDAC1 and N-Cor repressor complex components. Its function is as follows. Histone deacetylase that catalyzes the deacetylation of lysine residues on the N-terminal part of the core histones (H2A, H2B, H3 and H4). Histone deacetylation gives a tag for epigenetic repression and plays an important role in transcriptional regulation, cell cycle progression and developmental events. Histone deacetylases act via the formation of large multiprotein complexes. Acts as a component of the histone deacetylase NuRD complex which participates in the remodeling of chromatin. As part of the SIN3B complex is recruited downstream of the constitutively active genes transcriptional start sites through interaction with histones and mitigates histone acetylation and RNA polymerase II progression within transcribed regions contributing to the regulation of transcription. Also functions as a deacetylase for non-histone targets, such as NR1D2, RELA, SP1, SP3, STAT3 and TSHZ3. Deacetylates SP proteins, SP1 and SP3, and regulates their function. Component of the BRG1-RB1-HDAC1 complex, which negatively regulates the CREST-mediated transcription in resting neurons. Upon calcium stimulation, HDAC1 is released from the complex and CREBBP is recruited, which facilitates transcriptional activation. Deacetylates TSHZ3 and regulates its transcriptional repressor activity. Deacetylates 'Lys-310' in RELA and thereby inhibits the transcriptional activity of NF-kappa-B. Deacetylates NR1D2 and abrogates the effect of KAT5-mediated relieving of NR1D2 transcription repression activity. Component of a RCOR/GFI/KDM1A/HDAC complex that suppresses, via histone deacetylase (HDAC) recruitment, a number of genes implicated in multilineage blood cell development. Involved in CIART-mediated transcriptional repression of the circadian transcriptional activator: CLOCK-BMAL1 heterodimer. Required for the transcriptional repression of circadian target genes, such as PER1, mediated by the large PER complex or CRY1 through histone deacetylation. In addition to protein deacetylase activity, also has protein-lysine deacylase activity: acts as a protein decrotonylase and delactylase by mediating decrotonylation ((2E)-butenoyl) and delactylation (lactoyl) of histones, respectively. In Rattus norvegicus (Rat), this protein is Histone deacetylase 1 (Hdac1).